We begin with the raw amino-acid sequence, 193 residues long: ATP synthase subunit b (193 aa).

A helical transmembrane segment spans residues 35-55; that stretch reads IPMMLATFIAFVIVFLLLFFF.

The protein belongs to the ATPase B chain family. F-type ATPases have 2 components, F(1) - the catalytic core - and F(0) - the membrane proton channel. F(1) has five subunits: alpha(3), beta(3), gamma(1), delta(1), epsilon(1). F(0) has three main subunits: a(1), b(2) and c(10-14). The alpha and beta chains form an alternating ring which encloses part of the gamma chain. F(1) is attached to F(0) by a central stalk formed by the gamma and epsilon chains, while a peripheral stalk is formed by the delta and b chains.

The protein localises to the cell membrane. In terms of biological role, f(1)F(0) ATP synthase produces ATP from ADP in the presence of a proton or sodium gradient. F-type ATPases consist of two structural domains, F(1) containing the extramembraneous catalytic core and F(0) containing the membrane proton channel, linked together by a central stalk and a peripheral stalk. During catalysis, ATP synthesis in the catalytic domain of F(1) is coupled via a rotary mechanism of the central stalk subunits to proton translocation. Functionally, component of the F(0) channel, it forms part of the peripheral stalk, linking F(1) to F(0). The polypeptide is ATP synthase subunit b (Mycoplasmopsis synoviae (strain 53) (Mycoplasma synoviae)).